The primary structure comprises 798 residues: Copalyl diphosphate synthase 1, chloroplastic (798 aa).

A chloroplast-targeting transit peptide spans 1-72 (MASLSTMHLI…SKVAGINRVA (72 aa)). Substrate is bound at residue Lys251. Mg(2+) contacts are provided by Asp383 and Asp385. The DXDD motif signature appears at 383 to 386 (DIDD). Lys469 contributes to the substrate binding site.

The protein belongs to the terpene synthase family. Tpsc subfamily. Mg(2+) is required as a cofactor. As to expression, highly expressed in roots, and, at low levels, in stems and leaves.

It is found in the plastid. It localises to the chloroplast. The enzyme catalyses (2E,6E,10E)-geranylgeranyl diphosphate = (+)-copalyl diphosphate. The protein operates within secondary metabolite biosynthesis; terpenoid biosynthesis. Its function is as follows. Involved in the biosynthesis of ent-kaurene diterpenoids natural products such as oridonin, miltiradiene, eriocalyxin B and nezukol, known to exhibit antitumor, anti-inflammatory and antibacterial activities. Catalyzes the conversion of (2E,6E,10E)-geranylgeranyl diphosphate (GGPP) to (+)-copalyl diphosphate ((+)-CPP). This chain is Copalyl diphosphate synthase 1, chloroplastic, found in Isodon rubescens (Rabdosia rubescens).